Here is a 1187-residue protein sequence, read N- to C-terminus: MRPRGAAFAAGPPGDLHLGTAIGFAGAIWRSRSPAMSTLLDIKSSVLRQVQVCPSFRRRTEQDPGSASADPQEPATGAWKPGDGVEFFAHMRLMLKKGEGRQGLPCLEVPLRSGSPAPPEPVDPSLGLRALAPEEVEMLYEEALYTVLYRAGTMGPDQVDDEEALLSYLQQVFGTSLEEHTEAIERVRKAKAPTYALKVSVMRAKNLLAKDPNGFSDPYCMLGILPASDATREPRAQKEQRFGFRKGSKRGGPLPAKCIQVTEVKSSTLNPVWKEHFLFEIEDVSTDQLHLDIWDHDDDVSLVEACRKLNEVIGLKGMGRYFKQIVKSARANGTAGPTEDHTDDFLGCLNIPVREVPVAGVDRWFKLEPRSSASRVQGHCHLVLKLITTQRDTAMSQRGRSGFLSHLLLLSHLLRLEHSAEEPNSSSWRGELSTPAATILCLHGAQSNLSPLQLAVLHWQVSSRHHQTCTLDYSYLLGLLEDMQAHWEEAPSLPQEQEESLADSLSAFSEFGLQLLRQLRDYFPATNSTAVHRLELLLKCLGKLQLFQPSFEICPFESELNMDIAAALKRGNREWYDRILNDKSPREQPGPQRLPGLVVLADAVYDDLQFCYSVYASLFHSILNVDVFTLTFRQLERLVAEEAWVLTEELSPKMTLEVASGLFELYLTLADLQRFWDSIPGRDSRSLALAGIHAPFLPAVKLWFQVLRDQAKWRLQGAVDMDTLEPVDASSRHSSSAATAGLCLSHIQELWVRLAWPDPAQAQGLGTQLGQDVCEATLFYTELLRKKVDTQPGAAGEAVSEALCVVLNNVELVRKAAGQALKGLAWPEGATGPEGVLPRPLLSCTQALDDDLQREAHTVTAHLTSKMVGDIRKYVQHISLSPDSIQNDEAVAPLMKYLDEKLALLNASLVKGNLSRVLEALWELLLQAILQALGANRDVSADFYSRFHFTLEALVSFFHAEGQGLPLESLRDGSYKRLKEELRLHKCSTRECIEQFYLDKLKQRTLEQNRFGRLSVRCHYEAAEQRLAVEVLHAADLLPLDANGLSDPFVIVELGPPHLFPLVRSQRTQVKTRTLHPVYDELFYFSVPAEACRRRAACVLFTVMDHDWLSTNDFAGEAALGLGGVTGVARPQVGGGARAGQPVTLHLCRPRAQVRSALRRLEGRTSKEAQEFVKKLKELEKCMEADP.

Positions 55–81 are disordered; sequence SFRRRTEQDPGSASADPQEPATGAWKP. One can recognise a C2 1 domain in the interval 176–335; it reads SLEEHTEAIE…VKSARANGTA (160 aa). Positions 211, 217, 295, and 297 each coordinate Ca(2+). Residues 663-784 form the MHD1 domain; it reads FELYLTLADL…EATLFYTELL (122 aa). Positions 888 to 996 constitute an MHD2 domain; it reads DEAVAPLMKY…CSTRECIEQF (109 aa). The 127-residue stretch at 1010 to 1136 folds into the C2 2 domain; that stretch reads RFGRLSVRCH…GVARPQVGGG (127 aa). Residues leucine 1040, aspartate 1041, aspartate 1047, aspartate 1105, aspartate 1107, serine 1110, and aspartate 1113 each coordinate Ca(2+).

Belongs to the unc-13 family. In terms of assembly, interacts with ADGRB1; this interaction is direct. Interacts with endosomal SNARE proteins VAMP3, VAMP4, STX6 and STX16; this interaction is increased in the presence of calcium. Ca(2+) serves as cofactor. Predominantly expressed in brain. Also expressed in nonneural tissues such as breast and testes epithelium.

The protein localises to the cytoplasm. The protein resides in the cytosol. It localises to the recycling endosome membrane. It is found in the late endosome membrane. Its subcellular location is the golgi apparatus. The protein localises to the trans-Golgi network membrane. The protein resides in the cell membrane. Its function is as follows. Functions in endosome to Golgi retrograde transport. In response to calcium influx, may interact with SNARE fusion receptors and membrane phospholipids to mediate endosome fusion with the trans-Golgi network. By promoting the recycling of secretory vesicle transmembrane proteins, it indirectly controls dense-core secretory vesicle biogenesis, maturation and their ability to mediate the constitutive and regulated secretion of neurotransmitters and hormones. May regulate behavior and food intake by controlling calcium-stimulated exocytosis of neurotransmitters including NPY and serotonin and hormones like insulin. Proposed to play a role in hypothalamic neuronal firing by modulating gamma-aminobutyric acid (GABA)ergic inhibitory neurotransmission. In Homo sapiens (Human), this protein is BAI1-associated protein 3.